Here is a 153-residue protein sequence, read N- to C-terminus: UPF0235 protein C15orf40 (153 aa).

A compositionally biased stretch (basic residues) spans Met1–Arg12. Residues Met1–Val55 form a disordered region. The residue at position 116 (Ser116) is a Phosphoserine.

Belongs to the UPF0235 family.

The sequence is that of UPF0235 protein C15orf40 (C15orf40) from Homo sapiens (Human).